We begin with the raw amino-acid sequence, 415 residues long: Metal tolerance protein 5 (415 aa).

Over 1–124 (MAAAVAGGGE…REKVARSETL (124 aa)) the chain is Cytoplasmic. A helical transmembrane segment spans residues 125–145 (AIRLSNIANMVLFAAKVYASV). The Vacuolar segment spans residues 146–150 (RSGSL). The helical transmembrane segment at 151–171 (AIIASTLDSLLDLLSGFILWF) threads the bilayer. Topologically, residues 172–192 (TAFSMQTPNPYRYPIGKKRMQ) are cytoplasmic. A helical transmembrane segment spans residues 193 to 213 (PLGILVFASVMATLGLQIILE). Residues 214 to 232 (SVRSLLSDGDEFSLTKEQE) lie on the Vacuolar side of the membrane. A helical membrane pass occupies residues 233–253 (KWVVDIMLAVTLVKLALVLYC). Over 254–268 (RTFTNEIVKAYAQDH) the chain is Cytoplasmic. The chain crosses the membrane as a helical span at residues 269 to 291 (FFDVITNMIGLVAALLATYIEGW). Topologically, residues 292–293 (ID) are vacuolar. A helical membrane pass occupies residues 294-313 (PVGAIILAIYTIRTWSMTVL). Topologically, residues 314 to 415 (ENVHSLVGQS…RPEHALSHEK (102 aa)) are cytoplasmic.

This sequence belongs to the cation diffusion facilitator (CDF) transporter (TC 2.A.4) family. SLC30A subfamily.

The protein resides in the vacuole membrane. In terms of biological role, involved in sequestration of excess metal in the cytoplasm into vacuoles to maintain metal homeostasis. The chain is Metal tolerance protein 5 (MTP5) from Oryza sativa subsp. japonica (Rice).